The primary structure comprises 355 residues: MNAPFHQLADAILAGTPATPEDALAVLRADDAELMSVVAAAGRLRRAHFGNTVKVNYLVNLKSGLCPENCNYCSQALGSDAPILKYSWLSKDETLKQTGAGLRGGASRVCLVSSGRGPSTRDIDKVTEMVVALKEEYPGVEVCACLGLLKDGQAQRLKDAGVDAYNHNINTAESNHDNIVQTHTYADRVDTVEKAKGGGLSPCSGLIAGLGETDEQLVEALFALRELGSDSIPVNFLMPFDGTPFENTWELSPTRCVKILAMARFVCPDKEIRIAGGREMHLRSLQSIALQVANSVFLGDYLTSEGQDAKADLEMIRDNGFVVLGSEEDLAQQAREPIDPAIRQRGAGTDVVPNA.

Positions 51 to 275 (NTVKVNYLVN…VCPDKEIRIA (225 aa)) constitute a Radical SAM core domain. Positions 66, 70, and 73 each coordinate [4Fe-4S] cluster. [2Fe-2S] cluster contacts are provided by cysteine 110, cysteine 143, cysteine 203, and arginine 273.

Belongs to the radical SAM superfamily. Biotin synthase family. Homodimer. Requires [4Fe-4S] cluster as cofactor. It depends on [2Fe-2S] cluster as a cofactor.

The enzyme catalyses (4R,5S)-dethiobiotin + (sulfur carrier)-SH + 2 reduced [2Fe-2S]-[ferredoxin] + 2 S-adenosyl-L-methionine = (sulfur carrier)-H + biotin + 2 5'-deoxyadenosine + 2 L-methionine + 2 oxidized [2Fe-2S]-[ferredoxin]. It participates in cofactor biosynthesis; biotin biosynthesis; biotin from 7,8-diaminononanoate: step 2/2. Functionally, catalyzes the conversion of dethiobiotin (DTB) to biotin by the insertion of a sulfur atom into dethiobiotin via a radical-based mechanism. This chain is Biotin synthase, found in Saccharopolyspora erythraea (strain ATCC 11635 / DSM 40517 / JCM 4748 / NBRC 13426 / NCIMB 8594 / NRRL 2338).